The chain runs to 122 residues: Small ribosomal subunit protein uS13 (122 aa).

A disordered region spans residues 95–122 (QLPVRGQRTHTNARTRKGKAKPIAGKKK).

It belongs to the universal ribosomal protein uS13 family. Part of the 30S ribosomal subunit. Forms a loose heterodimer with protein S19. Forms two bridges to the 50S subunit in the 70S ribosome.

In terms of biological role, located at the top of the head of the 30S subunit, it contacts several helices of the 16S rRNA. In the 70S ribosome it contacts the 23S rRNA (bridge B1a) and protein L5 of the 50S subunit (bridge B1b), connecting the 2 subunits; these bridges are implicated in subunit movement. Contacts the tRNAs in the A and P-sites. In Beijerinckia indica subsp. indica (strain ATCC 9039 / DSM 1715 / NCIMB 8712), this protein is Small ribosomal subunit protein uS13.